Here is a 240-residue protein sequence, read N- to C-terminus: Orotidine 5'-phosphate decarboxylase (240 aa).

Residues D19, K41, 68 to 77, T123, R184, Q193, G213, and R214 each bind substrate; that span reads DYKYYDIEET. K70 functions as the Proton donor in the catalytic mechanism.

It belongs to the OMP decarboxylase family. Type 1 subfamily. Homodimer.

It catalyses the reaction orotidine 5'-phosphate + H(+) = UMP + CO2. The protein operates within pyrimidine metabolism; UMP biosynthesis via de novo pathway; UMP from orotate: step 2/2. Functionally, catalyzes the decarboxylation of orotidine 5'-monophosphate (OMP) to uridine 5'-monophosphate (UMP). The protein is Orotidine 5'-phosphate decarboxylase of Nitrobacter winogradskyi (strain ATCC 25391 / DSM 10237 / CIP 104748 / NCIMB 11846 / Nb-255).